Reading from the N-terminus, the 322-residue chain is Ribosomal lysine N-methyltransferase 5 (322 aa).

S-adenosyl-L-methionine is bound by residues tryptophan 92, glycine 141–glycine 143, aspartate 163, tryptophan 214, and methionine 242.

It belongs to the class I-like SAM-binding methyltransferase superfamily. RKM5 family.

S-adenosyl-L-methionine-dependent protein-lysine N-methyltransferase that methylates 60S ribosomal protein L1. The protein is Ribosomal lysine N-methyltransferase 5 (RKM5) of Kluyveromyces lactis (strain ATCC 8585 / CBS 2359 / DSM 70799 / NBRC 1267 / NRRL Y-1140 / WM37) (Yeast).